A 277-amino-acid polypeptide reads, in one-letter code: Diaminopimelate epimerase (277 aa).

Residues N13, Q46, and N66 each contribute to the substrate site. C75 serves as the catalytic Proton donor. Residues 76-77 (GN), N159, N192, and 210-211 (ER) each bind substrate. Catalysis depends on C219, which acts as the Proton acceptor. Substrate is bound at residue 220-221 (GT).

This sequence belongs to the diaminopimelate epimerase family. In terms of assembly, homodimer.

It localises to the cytoplasm. The catalysed reaction is (2S,6S)-2,6-diaminopimelate = meso-2,6-diaminopimelate. Its pathway is amino-acid biosynthesis; L-lysine biosynthesis via DAP pathway; DL-2,6-diaminopimelate from LL-2,6-diaminopimelate: step 1/1. Its function is as follows. Catalyzes the stereoinversion of LL-2,6-diaminopimelate (L,L-DAP) to meso-diaminopimelate (meso-DAP), a precursor of L-lysine and an essential component of the bacterial peptidoglycan. The protein is Diaminopimelate epimerase of Azoarcus sp. (strain BH72).